A 107-amino-acid chain; its full sequence is Cell division protein FtsB (107 aa).

Over 1–3 (MGK) the chain is Cytoplasmic. A helical membrane pass occupies residues 4 to 21 (LTLLLLILLGWLQYSLWL). The Periplasmic segment spans residues 22–107 (GKNGVHDFVR…IPSTQNNAQQ (86 aa)). Residues 39 to 62 (QEVNNGKLKARNDQLFAEIDDLNG) are a coiled coil.

Belongs to the FtsB family. As to quaternary structure, part of a complex composed of FtsB, FtsL and FtsQ.

It is found in the cell inner membrane. In terms of biological role, essential cell division protein. May link together the upstream cell division proteins, which are predominantly cytoplasmic, with the downstream cell division proteins, which are predominantly periplasmic. The sequence is that of Cell division protein FtsB from Yersinia enterocolitica serotype O:8 / biotype 1B (strain NCTC 13174 / 8081).